The chain runs to 86 residues: uncharacterized protein (86 aa).

This is an uncharacterized protein from African swine fever virus (strain Badajoz 1971 Vero-adapted) (Ba71V).